Reading from the N-terminus, the 384-residue chain is Putative glutamate--cysteine ligase 2-2 (384 aa).

This sequence belongs to the glutamate--cysteine ligase type 2 family. YbdK subfamily.

It carries out the reaction L-cysteine + L-glutamate + ATP = gamma-L-glutamyl-L-cysteine + ADP + phosphate + H(+). ATP-dependent carboxylate-amine ligase which exhibits weak glutamate--cysteine ligase activity. This is Putative glutamate--cysteine ligase 2-2 from Rubrobacter xylanophilus (strain DSM 9941 / JCM 11954 / NBRC 16129 / PRD-1).